A 64-amino-acid polypeptide reads, in one-letter code: Large ribosomal subunit protein uL30 (64 aa).

It belongs to the universal ribosomal protein uL30 family. In terms of assembly, part of the 50S ribosomal subunit.

This is Large ribosomal subunit protein uL30 from Bradyrhizobium diazoefficiens (strain JCM 10833 / BCRC 13528 / IAM 13628 / NBRC 14792 / USDA 110).